The sequence spans 573 residues: Acetolactate synthase large subunit (573 aa).

Thiamine diphosphate is bound at residue glutamate 51. Residues arginine 153, 261-282, and 304-323 contribute to the FAD site; these read HGTLEANTAMHESDLILGIGVR and DIDPTSISKNVPVAIPIVGN. A thiamine pyrophosphate binding region spans residues 396-476; the sequence is QHQMFAALHY…VVIICLNNHF (81 aa). 2 residues coordinate Mg(2+): aspartate 447 and asparagine 474.

It belongs to the TPP enzyme family. As to quaternary structure, dimer of large and small chains. Mg(2+) is required as a cofactor. The cofactor is thiamine diphosphate.

The enzyme catalyses 2 pyruvate + H(+) = (2S)-2-acetolactate + CO2. Its pathway is amino-acid biosynthesis; L-isoleucine biosynthesis; L-isoleucine from 2-oxobutanoate: step 1/4. It functions in the pathway amino-acid biosynthesis; L-valine biosynthesis; L-valine from pyruvate: step 1/4. The chain is Acetolactate synthase large subunit (ilvI) from Haemophilus influenzae (strain ATCC 51907 / DSM 11121 / KW20 / Rd).